A 395-amino-acid polypeptide reads, in one-letter code: Argininosuccinate synthase (395 aa).

ATP contacts are provided by residues 10-18 (AYSGGLDTS) and Ala-37. Tyr-88 and Ser-93 together coordinate L-citrulline. ATP is bound at residue Gly-118. Residues Thr-120, Asn-124, and Asp-125 each coordinate L-aspartate. Asn-124 serves as a coordination point for L-citrulline. Positions 128, 179, 188, 264, and 276 each coordinate L-citrulline.

It belongs to the argininosuccinate synthase family. Type 1 subfamily. Homotetramer.

The protein resides in the cytoplasm. It carries out the reaction L-citrulline + L-aspartate + ATP = 2-(N(omega)-L-arginino)succinate + AMP + diphosphate + H(+). It functions in the pathway amino-acid biosynthesis; L-arginine biosynthesis; L-arginine from L-ornithine and carbamoyl phosphate: step 2/3. The protein is Argininosuccinate synthase of Pelagibacter ubique (strain HTCC1062).